We begin with the raw amino-acid sequence, 680 residues long: Methionine--tRNA ligase (680 aa).

Residues 15-25 (PYANGPVHIGH) carry the 'HIGH' region motif. Zn(2+) is bound by residues C147, C150, C160, and C163. The 'KMSKS' region motif lies at 332 to 336 (KISTS). T335 serves as a coordination point for ATP. The tRNA-binding domain maps to 579–680 (DFLKLDIRVG…AEVAPGSQVK (102 aa)).

The protein belongs to the class-I aminoacyl-tRNA synthetase family. MetG type 1 subfamily. In terms of assembly, homodimer. Zn(2+) is required as a cofactor.

Its subcellular location is the cytoplasm. It catalyses the reaction tRNA(Met) + L-methionine + ATP = L-methionyl-tRNA(Met) + AMP + diphosphate. In terms of biological role, is required not only for elongation of protein synthesis but also for the initiation of all mRNA translation through initiator tRNA(fMet) aminoacylation. The chain is Methionine--tRNA ligase from Porphyromonas gingivalis (strain ATCC 33277 / DSM 20709 / CIP 103683 / JCM 12257 / NCTC 11834 / 2561).